The following is a 268-amino-acid chain: Satratoxin biosynthesis SC1 cluster protein 4 (268 aa).

The next 4 membrane-spanning stretches (helical) occupy residues 34-54 (VWLV…VHIF), 78-98 (LFAI…GLAI), 113-133 (HLAG…IKIV), and 145-165 (AVIW…APIY).

The protein belongs to the SAT4 family.

It is found in the membrane. It participates in mycotoxin biosynthesis. Its function is as follows. Part of the satratoxin SC1 cluster involved in the biosynthesis of satratoxins, trichothecene mycotoxins that are associated with human food poisonings. Satratoxins are suggested to be made by products of multiple gene clusters (SC1, SC2 and SC3) that encode 21 proteins in all, including polyketide synthases, acetyltransferases, and other enzymes expected to modify the trichothecene skeleton. SC1 encodes 10 proteins, SAT1 to SAT10. The largest are SAT8, which encodes a putative polyketide synthase (PKS) with a conventional non-reducing architecture, and SAT10, a putative protein containing four ankyrin repeats and thus may be involved in protein scaffolding. The putative short-chain reductase SAT3 may assist the PKS in some capacity. SAT6 contains a secretory lipase domain and acts probably as a trichothecene esterase. SAT5 encodes a putative acetyltransferase, and so, with SAT6, may affect endogenous protection from toxicity. The probable transcription factor SAT9 may regulate the expression of the SC1 cluster. SC2 encodes proteins SAT11 to SAT16, the largest of which encodes the putative reducing PKS SAT13. SAT11 is a cytochrome P450 monooxygenase, while SAT14 and SAT16 are probable acetyltransferases. The SC2 cluster may be regulated by the transcription factor SAT15. SC3 is a small cluster that encodes 5 proteins, SAT17 to SAT21. SAT21 is a putative MFS-type transporter which may have a role in exporting secondary metabolites. The four other proteins putatively encoded in SC3 include the taurine hydroxylase-like protein SAT17, the O-methyltransferase SAT18, the acetyltransferase SAT19, and the Cys6-type zinc finger SAT20, the latter being probably involved in regulation of SC3 expression. The chain is Satratoxin biosynthesis SC1 cluster protein 4 from Stachybotrys chartarum (strain CBS 109288 / IBT 7711) (Toxic black mold).